A 307-amino-acid chain; its full sequence is Protein EI24 homolog (307 aa).

2 consecutive transmembrane segments (helical) span residues 53–73 and 92–112; these read FIHC…IYLY and MFTI…SIIA. The N-linked (GlcNAc...) asparagine glycan is linked to Asn135. The next 4 helical transmembrane spans lie at 153–173, 175–195, 225–245, and 260–280; these read LFGV…TNFI, FVII…ILRG, FFFP…LFII, and GILP…NVIL.

This sequence belongs to the EI24 family.

It is found in the membrane. The polypeptide is Protein EI24 homolog (Dictyostelium discoideum (Social amoeba)).